A 96-amino-acid polypeptide reads, in one-letter code: Large ribosomal subunit protein bL28 (96 aa).

It belongs to the bacterial ribosomal protein bL28 family.

In Orientia tsutsugamushi (strain Boryong) (Rickettsia tsutsugamushi), this protein is Large ribosomal subunit protein bL28.